The chain runs to 259 residues: 5'-nucleotidase SurE (259 aa).

A divalent metal cation is bound by residues Asp10, Asp11, Ser41, and Asn96.

Belongs to the SurE nucleotidase family. Requires a divalent metal cation as cofactor.

It is found in the cytoplasm. It carries out the reaction a ribonucleoside 5'-phosphate + H2O = a ribonucleoside + phosphate. Its function is as follows. Nucleotidase that shows phosphatase activity on nucleoside 5'-monophosphates. The sequence is that of 5'-nucleotidase SurE from Wolinella succinogenes (strain ATCC 29543 / DSM 1740 / CCUG 13145 / JCM 31913 / LMG 7466 / NCTC 11488 / FDC 602W) (Vibrio succinogenes).